The following is a 123-amino-acid chain: Transmembrane protein 80 (123 aa).

A run of 4 helical transmembrane segments spans residues 2 to 22 (LFHLSGLYSALYFLATLLMIV), 35 to 55 (LALDLVLLLLMGILKVAQLYL), 68 to 88 (LAASLAFTAVGGLLSVHFLLW), and 102 to 122 (VLLVLHGLEAGLQVVVIADFI).

It is found in the membrane. Its subcellular location is the cell projection. The protein resides in the cilium. This chain is Transmembrane protein 80 (Tmem80), found in Mus musculus (Mouse).